Consider the following 348-residue polypeptide: F-box protein At2g20380 (348 aa).

The F-box domain occupies 14–60 (SPESNSLPNDLIVTILARLSQSYYPKLSLVSKTFRAILASPELYQTR).

The protein is F-box protein At2g20380 of Arabidopsis thaliana (Mouse-ear cress).